A 1363-amino-acid polypeptide reads, in one-letter code: Spike glycoprotein (1363 aa).

The signal sequence occupies residues 1-13 (MFLILLISLPMAL). The Extracellular portion of the chain corresponds to 14 to 1307 (AVIGDLKCTT…GTYEYYVKWP (1294 aa)). In terms of domain architecture, BetaCoV S1-NTD spans 15-298 (VIGDLKCTTV…DFMSEIKCKT (284 aa)). Cystine bridges form between C21–C165, C160–C193, C172–C252, C286–C296, and C331–C356. Residues N59 and N133 are each glycosylated (N-linked (GlcNAc...) asparagine; by host). An N-linked (GlcNAc...) asparagine; by host glycan is attached at N198. One can recognise a BetaCoV S1-CTD domain in the interval 329–617 (PDCNIEAWLN…DVNSGTTCST (289 aa)). N359 carries an N-linked (GlcNAc...) asparagine; by host glycan. Disulfide bonds link C374/C427 and C386/C615. 7 N-linked (GlcNAc...) asparagine; by host glycosylation sites follow: N437, N649, N676, N696, N714, N739, and N788. Fusion peptide regions lie at residues 914 to 935 (SAIE…VEAY) and 933 to 953 (EAYN…VQSY). N937 carries N-linked (GlcNAc...) asparagine; by host glycosylation. C938 and C949 form a disulfide bridge. Residues 1014 to 1064 (QKLIANAFNNALDAIQEGFDATNSALVKIQAVVNANAEALNNLLQQLSNRF) form a heptad repeat 1 region. The stretch at 1043-1087 (QAVVNANAEALNNLLQQLSNRFGAISSSLQEILSRLDALEAQAQI) forms a coiled coil. 6 N-linked (GlcNAc...) asparagine; by host glycosylation sites follow: N1194, N1224, N1234, N1253, N1267, and N1288. The heptad repeat 2 stretch occupies residues 1258–1296 (APDLSLDYINVTFLDLQDEMNRLQEAIKVLNQSYINLKD). Residues 1269-1297 (TFLDLQDEMNRLQEAIKVLNQSYINLKDI) adopt a coiled-coil conformation. A helical transmembrane segment spans residues 1308-1328 (WYVWLLIGLAGVAMLVLLFFI). At 1329 to 1363 (CCCTGCGTSCFKKCGGCCDDYTGHQELVIKTSHDD) the chain is on the cytoplasmic side. The KxHxx motif lies at 1359-1363 (TSHDD).

This sequence belongs to the betacoronaviruses spike protein family. In terms of assembly, homotrimer; each monomer consists of a S1 and a S2 subunit. The resulting peplomers protrude from the virus surface as spikes. Post-translationally, specific enzymatic cleavages in vivo yield mature proteins. The precursor is processed into S1 and S2 by host cell furin or another cellular protease to yield the mature S1 and S2 proteins. Additionally, a second cleavage leads to the release of a fusion peptide after viral attachment to host cell receptor. In terms of processing, the cytoplasmic Cys-rich domain is palmitoylated. Spike glycoprotein is digested within host endosomes.

The protein localises to the virion membrane. The protein resides in the host endoplasmic reticulum-Golgi intermediate compartment membrane. It is found in the host cell membrane. In terms of biological role, attaches the virion to the cell membrane by interacting with host receptor, initiating the infection. Its function is as follows. Mediates fusion of the virion and cellular membranes by acting as a class I viral fusion protein. Under the current model, the protein has at least three conformational states: pre-fusion native state, pre-hairpin intermediate state, and post-fusion hairpin state. During viral and target cell membrane fusion, the coiled coil regions (heptad repeats) assume a trimer-of-hairpins structure, positioning the fusion peptide in close proximity to the C-terminal region of the ectodomain. The formation of this structure appears to drive apposition and subsequent fusion of viral and target cell membranes. Acts as a viral fusion peptide which is unmasked following S2 cleavage occurring upon virus endocytosis. The polypeptide is Spike glycoprotein (Bos taurus (Bovine)).